A 474-amino-acid chain; its full sequence is DNA damage checkpoint control protein MEC3 (474 aa).

The residue at position 452 (serine 452) is a Phosphoserine.

The protein belongs to the MEC3 family. Component of the checkpoint clamp complex composed of DDC1, MEC3 and RAD17. The interaction with MEC3 is performed in a RAD17-dependent manner. The checkpoint clamp complex loads onto DNA. Interacts with the DNA polymerase zeta subunit REV7. Also forms a heterotrimer with 2 RAD17 subunits. Interacts with SET1.

It localises to the nucleus. Functionally, component of the checkpoint clamp complex involved in the surveillance mechanism that allows the DNA repair pathways to act to restore the integrity of the DNA prior to DNA synthesis or separation of the replicated chromosomes. Associates with sites of DNA damage and modulates the MEC1 signaling pathway and the activation of RAD53 in response to DNA damage at phase G1. The complex also physically regulates DNA polymerase zeta-dependent mutagenesis by controlling the access of polymerase zeta to damaged DNA. This chain is DNA damage checkpoint control protein MEC3 (MEC3), found in Saccharomyces cerevisiae (strain ATCC 204508 / S288c) (Baker's yeast).